A 566-amino-acid polypeptide reads, in one-letter code: Beta-1,4 N-acetylgalactosaminyltransferase 2 (566 aa).

The ER exit and post-Golgi subcellular localization stretch occupies residues methionine 1–cysteine 22. Over methionine 1–arginine 67 the chain is Cytoplasmic. The Vesicular targeting signature appears at glycine 9–valine 15. The helical; Signal-anchor for type II membrane protein transmembrane segment at phenylalanine 68 to phenylalanine 88 threads the bilayer. Over glycine 89–alanine 566 the chain is Lumenal.

Belongs to the glycosyltransferase 2 family. Homodimer; disulfide-linked. In terms of tissue distribution, widely expressed. Highly expressed in colon and to a lesser extent in kidney, stomach, ileum and rectum.

It is found in the golgi apparatus. It localises to the trans-Golgi network membrane. Its subcellular location is the cytoplasmic vesicle membrane. The catalysed reaction is an N-acetyl-alpha-neuraminyl-(2-&gt;3)-beta-D-galactosyl derivative + UDP-N-acetyl-alpha-D-galactosamine = an N-acetyl-beta-D-galactosaminyl-(1-&gt;4)-[N-acetyl-alpha-neuraminyl-(2-&gt;3)]-beta-D-galactosyl derivative + UDP + H(+). The enzyme catalyses a 3-O-{alpha-Neu5Ac-(2-&gt;3)-beta-D-Gal-(1-&gt;3)-[alpha-Neu5Ac-(2-&gt;6)]-alpha-D-GalNAc}-L-seryl-[protein] + UDP-N-acetyl-alpha-D-galactosamine = a 3-O-{[alpha-Neu5Ac-(2-&gt;3)]-beta-D-GalNAc-(1-&gt;4)-beta-D-Gal-(1-&gt;3)-[alpha-Neu5Ac-(2-&gt;6)]-alpha-D-GalNAc}-L-seryl-[protein] + UDP + H(+). It catalyses the reaction a 3-O-{alpha-Neu5Ac-(2-&gt;3)-beta-D-Gal-(1-&gt;3)-[alpha-Neu5Ac-(2-&gt;6)]-alpha-D-GalNAc}-L-threonyl-[protein] + UDP-N-acetyl-alpha-D-galactosamine = a 3-O-{[alpha-Neu5Ac-(2-&gt;3)]-beta-D-GalNAc-(1-&gt;4)-beta-D-Gal-(1-&gt;3)-[alpha-Neu5Ac-(2-&gt;6)]-alpha-D-GalNAc}-L-threonyl-[protein] + UDP + H(+). It carries out the reaction a neolactoside IV(3)-alpha-NeuAc-nLc4Cer + UDP-N-acetyl-alpha-D-galactosamine = a neolactoside IV(4)-GalNAc,IV(3)-alpha-NeuAc-nLc4Cer + UDP + H(+). It participates in protein modification; protein glycosylation. Its pathway is glycolipid biosynthesis. Functionally, beta-1,4 N-acetylgalactosaminyltransferase involved in the biosynthesis of Sd(a) histo-blood group antigen. Catalyzes the transfer of N-acetylgalactosamine (GalNAc) group in a beta-1,4-linkage from UDP-GalNAc to the galactose residue of NeuAcalpha2-&gt;3Gal-R to form Sd(a) glycan epitope GalNAcbeta1-&gt;4(NeuAcalpha2-&gt;3)Gal-R. The Sd(a) epitope is carried in O- and N-linked glycoproteins and glycolipids, including O-linked core 1 structures on GYPA/glycophorin, SLC4A1 and SLC29A1 in erythrocytes, N-linked glycans attached to the Tamm-Horsfall glycoprotein UMOD/uromodulin in renal fluids, O-linked core 3 glycans on mucins in colon and neolactosides in gastric mucosa. Confers protection against influenza A virus strains that attach to NeuAcalpha2-&gt;3-carrying host receptors. Modifies N-glycan chains on host receptors and prevents virus entry into cells. In Homo sapiens (Human), this protein is Beta-1,4 N-acetylgalactosaminyltransferase 2.